The following is a 104-amino-acid chain: Large ribosomal subunit protein uL24 (104 aa).

The protein belongs to the universal ribosomal protein uL24 family. Part of the 50S ribosomal subunit.

Its function is as follows. One of two assembly initiator proteins, it binds directly to the 5'-end of the 23S rRNA, where it nucleates assembly of the 50S subunit. One of the proteins that surrounds the polypeptide exit tunnel on the outside of the subunit. This chain is Large ribosomal subunit protein uL24, found in Caulobacter sp. (strain K31).